The following is a 220-amino-acid chain: Deoxyribose-phosphate aldolase (220 aa).

The active-site Proton donor/acceptor is the Asp-89. The Schiff-base intermediate with acetaldehyde role is filled by Lys-151. Lys-180 functions as the Proton donor/acceptor in the catalytic mechanism.

The protein belongs to the DeoC/FbaB aldolase family. DeoC type 1 subfamily.

It localises to the cytoplasm. The enzyme catalyses 2-deoxy-D-ribose 5-phosphate = D-glyceraldehyde 3-phosphate + acetaldehyde. Its pathway is carbohydrate degradation; 2-deoxy-D-ribose 1-phosphate degradation; D-glyceraldehyde 3-phosphate and acetaldehyde from 2-deoxy-alpha-D-ribose 1-phosphate: step 2/2. In terms of biological role, catalyzes a reversible aldol reaction between acetaldehyde and D-glyceraldehyde 3-phosphate to generate 2-deoxy-D-ribose 5-phosphate. This chain is Deoxyribose-phosphate aldolase, found in Bdellovibrio bacteriovorus (strain ATCC 15356 / DSM 50701 / NCIMB 9529 / HD100).